Consider the following 245-residue polypeptide: Sugar fermentation stimulation protein homolog (245 aa).

The protein belongs to the SfsA family.

The protein is Sugar fermentation stimulation protein homolog of Yersinia pseudotuberculosis serotype I (strain IP32953).